The primary structure comprises 917 residues: Auxin response factor 17 (917 aa).

The segment at residues 134 to 236 (FCKTLTASDT…QLLLGIRRAN (103 aa)) is a DNA-binding region (TF-B3). Residues 571 to 649 (SVPNALSPFS…RPTAVPVPDP (79 aa)) form a disordered region. 2 stretches are compositionally biased toward low complexity: residues 576-594 (LSPF…MTLQ) and 604-620 (SYPD…NTST). The region spanning 786 to 870 (ATFVKVYKSG…SCIKILSPQE (85 aa)) is the PB1 domain.

The protein belongs to the ARF family. As to quaternary structure, homodimers and heterodimers. As to expression, expressed in roots, culms, leaves and young panicles.

The protein resides in the nucleus. Functionally, auxin response factors (ARFs) are transcriptional factors that bind specifically to the DNA sequence 5'-TGTCTC-3' found in the auxin-responsive promoter elements (AuxREs). In Oryza sativa subsp. japonica (Rice), this protein is Auxin response factor 17 (ARF17).